The primary structure comprises 352 residues: Cell division protein ZipA (352 aa).

Over 1 to 5 (MQELR) the chain is Periplasmic. The chain crosses the membrane as a helical span at residues 6-26 (LVLIIVGALAISALLLHGLWT). Over 27–352 (SRKEKPAKFG…REKAKLYSQA (326 aa)) the chain is Cytoplasmic. A compositionally biased stretch (basic and acidic residues) spans 35–54 (FGEKPLGKLDDSNRDTEGFD). The interval 35–56 (FGEKPLGKLDDSNRDTEGFDHT) is disordered.

The protein belongs to the ZipA family. In terms of assembly, interacts with FtsZ via their C-terminal domains.

The protein resides in the cell inner membrane. Essential cell division protein that stabilizes the FtsZ protofilaments by cross-linking them and that serves as a cytoplasmic membrane anchor for the Z ring. Also required for the recruitment to the septal ring of downstream cell division proteins. This Photobacterium profundum (strain SS9) protein is Cell division protein ZipA.